The following is a 306-amino-acid chain: Recombination-associated protein RdgC (306 aa).

It belongs to the RdgC family.

The protein resides in the cytoplasm. It is found in the nucleoid. Its function is as follows. May be involved in recombination. The protein is Recombination-associated protein RdgC of Pseudomonas aeruginosa (strain ATCC 15692 / DSM 22644 / CIP 104116 / JCM 14847 / LMG 12228 / 1C / PRS 101 / PAO1).